Reading from the N-terminus, the 211-residue chain is Ribonuclease HII (211 aa).

In terms of domain architecture, RNase H type-2 spans 1 to 205 (MRFGVDEAGK…CDDVLAAASQ (205 aa)). 3 residues coordinate a divalent metal cation: D6, E7, and D100.

It belongs to the RNase HII family. It depends on Mn(2+) as a cofactor. Requires Mg(2+) as cofactor.

It localises to the cytoplasm. It catalyses the reaction Endonucleolytic cleavage to 5'-phosphomonoester.. In terms of biological role, endonuclease that specifically degrades the RNA of RNA-DNA hybrids. This chain is Ribonuclease HII, found in Haloarcula marismortui (strain ATCC 43049 / DSM 3752 / JCM 8966 / VKM B-1809) (Halobacterium marismortui).